The sequence spans 361 residues: Probable galacturonosyltransferase-like 5 (361 aa).

Over 1 to 6 (MHWITR) the chain is Cytoplasmic. The helical; Signal-anchor for type II membrane protein transmembrane segment at 7–27 (FSAFFSAALAMILLSPSLQSF) threads the bilayer. Residues 28–361 (SPAAAIRSSH…APYDLYKHSH (334 aa)) are Lumenal-facing. Asn-218 and Asn-234 each carry an N-linked (GlcNAc...) asparagine glycan.

The protein belongs to the glycosyltransferase 8 family.

It is found in the golgi apparatus membrane. The protein operates within glycan metabolism; pectin biosynthesis. Functionally, may be involved in pectin and/or xylans biosynthesis in cell walls. The chain is Probable galacturonosyltransferase-like 5 (GATL5) from Arabidopsis thaliana (Mouse-ear cress).